Consider the following 191-residue polypeptide: Molybdenum cofactor guanylyltransferase (191 aa).

GTP contacts are provided by residues 11 to 13 (LCG), Lys23, Asp66, and Asp97. Residue Asp97 participates in Mg(2+) binding.

Belongs to the MobA family. As to quaternary structure, monomer. Mg(2+) is required as a cofactor.

Its subcellular location is the cytoplasm. The enzyme catalyses Mo-molybdopterin + GTP + H(+) = Mo-molybdopterin guanine dinucleotide + diphosphate. Its function is as follows. Transfers a GMP moiety from GTP to Mo-molybdopterin (Mo-MPT) cofactor (Moco or molybdenum cofactor) to form Mo-molybdopterin guanine dinucleotide (Mo-MGD) cofactor. In Campylobacter jejuni subsp. jejuni serotype O:6 (strain 81116 / NCTC 11828), this protein is Molybdenum cofactor guanylyltransferase.